A 251-amino-acid chain; its full sequence is HTH-type transcriptional regulator UlaR (251 aa).

Positions 3–58 (EAQRHQILLEMLAQLGFVTVEKVVERLGISPATARRDINKLDESGKLKKVRNGAEA) constitute an HTH deoR-type domain. The H-T-H motif DNA-binding region spans 20–39 (VTVEKVVERLGISPATARRD).

The protein localises to the cytoplasm. Represses ulaG and the ulaABCDEF operon. The chain is HTH-type transcriptional regulator UlaR from Escherichia coli O139:H28 (strain E24377A / ETEC).